A 362-amino-acid chain; its full sequence is Chorismate synthase (362 aa).

Positions 48 and 54 each coordinate NADP(+). FMN contacts are provided by residues 125 to 127 (RSS), 241 to 242 (NA), Gly286, 301 to 305 (KPTSS), and Arg327.

The protein belongs to the chorismate synthase family. In terms of assembly, homotetramer. FMNH2 is required as a cofactor.

The catalysed reaction is 5-O-(1-carboxyvinyl)-3-phosphoshikimate = chorismate + phosphate. The protein operates within metabolic intermediate biosynthesis; chorismate biosynthesis; chorismate from D-erythrose 4-phosphate and phosphoenolpyruvate: step 7/7. Its function is as follows. Catalyzes the anti-1,4-elimination of the C-3 phosphate and the C-6 proR hydrogen from 5-enolpyruvylshikimate-3-phosphate (EPSP) to yield chorismate, which is the branch point compound that serves as the starting substrate for the three terminal pathways of aromatic amino acid biosynthesis. This reaction introduces a second double bond into the aromatic ring system. In Paramagnetospirillum magneticum (strain ATCC 700264 / AMB-1) (Magnetospirillum magneticum), this protein is Chorismate synthase.